Consider the following 336-residue polypeptide: Cellodextrinase A (336 aa).

Residue E141 is the Proton donor of the active site.

The protein belongs to the glycosyl hydrolase 5 (cellulase A) family.

It localises to the secreted. Functionally, crystalline cellulose degradation. The sequence is that of Cellodextrinase A (celA) from Ruminococcus flavefaciens.